Consider the following 49-residue polypeptide: Large ribosomal subunit protein bL33A (49 aa).

The protein belongs to the bacterial ribosomal protein bL33 family.

This Staphylococcus aureus (strain Mu3 / ATCC 700698) protein is Large ribosomal subunit protein bL33A.